The chain runs to 493 residues: MTLVDKFVTHVISESSFEEMDRIYLTNRVLARVGEGVLEVETNLDKLIDLKDQLVEEAVRLETIEDSQTAREILGTELMDLVTPCPSQVNRDFWEAYAYSPEQAIEDFYQLSQKNDYIKLKAIAKNIAYRVPSDYGELEITINLSKPEKDPKEIAVAKLVQASNYPQCQLCLENEGYHGRVNHPARSNHRIIRFEMVGQEWGFQYSPYAYFNEHCIFLDGQHRPMAISRQSFERLLAIVEQFPGYFAGSNADLPIVGGSILTHDHYQGGRHVFPMELAPLQKTFRFAGFEQVKAGIIKWPMSVLRLTSDSKEDLINLADKIFQEWRQYSDSSVQILAETDGTPHHTITPIARKRDGQFELDLVLRDNQTSAEHPDGIYHPHKDVQHIKKENIGLIEVMGLAILPPRLKEEVEQVASYLVGEAVTVADYHQEWADQLKSQHPDLTDKEKALAIVKDSVGAIFVRVLEDAGVYKQTEQGQTAFMRFVEQVGISLD.

The protein belongs to the galactose-1-phosphate uridylyltransferase type 2 family.

It localises to the cytoplasm. The enzyme catalyses alpha-D-galactose 1-phosphate + UDP-alpha-D-glucose = alpha-D-glucose 1-phosphate + UDP-alpha-D-galactose. It functions in the pathway carbohydrate metabolism; galactose metabolism. The chain is Galactose-1-phosphate uridylyltransferase from Streptococcus pneumoniae (strain CGSP14).